Here is a 574-residue protein sequence, read N- to C-terminus: Zinc finger protein 394 (574 aa).

S12 is subject to Phosphoserine. Residue K40 forms a Glycyl lysine isopeptide (Lys-Gly) (interchain with G-Cter in SUMO2) linkage. The region spanning 64–146 (RLHFRQLRYQ…AVVRALQRAL (83 aa)) is the SCAN box domain. One can recognise a KRAB domain in the interval 155-230 (VTFEDMAVSL…LQEAFQGKHP (76 aa)). Residues 182–202 (ESAQKDSGSTVPPSLESRVEN) form a disordered region. Glycyl lysine isopeptide (Lys-Gly) (interchain with G-Cter in SUMO2) cross-links involve residues K203, K228, and K254. The segment at 231-284 (LFSKCGSTHEDRVEKQSGNPLPLKLENSAEAEGLNSISDVNKNGSIEGEDSKNN) is disordered. Over residues 265–274 (NSISDVNKNG) the composition is skewed to polar residues. K282 participates in a covalent cross-link: Glycyl lysine isopeptide (Lys-Gly) (interchain with G-Cter in SUMO2). 7 consecutive C2H2-type zinc fingers follow at residues 358-380 (YKCGNCGKSFKQRSDLFRHQRIH), 386-408 (YGCQECGKSFSQSAALTKHQRTH), 414-436 (YTCLKCGERFRQNSHLNRHQSTH), 442-463 (FKCEECGETCRISNLFRHQRLH), 469-491 (YKCEECKKSFKQRSDLFKHHRIH), 497-519 (YGCSVCGKRFNQSATLIKHQRIH), and 525-547 (YKCLECGERFRQSTHLIRHQRIH). K443 is covalently cross-linked (Glycyl lysine isopeptide (Lys-Gly) (interchain with G-Cter in SUMO2)).

The protein belongs to the krueppel C2H2-type zinc-finger protein family.

The protein localises to the nucleus. May be involved in transcriptional regulation. The chain is Zinc finger protein 394 (ZNF394) from Pongo abelii (Sumatran orangutan).